The chain runs to 321 residues: Bifunctional methyltransferase/endonuclease (321 aa).

Positions 1–86 (MLSVDYENFD…PLGSAEKMRR (86 aa)) are probable methylated-DNA--protein-cysteine methyltransferase. The active site involves C61. The endonuclease V stretch occupies residues 87-318 (LIRDGITITN…YDFSTRNTAI (232 aa)). 2 residues coordinate Mg(2+): D145 and D204.

In the N-terminal section; belongs to the MGMT family. The protein in the C-terminal section; belongs to the endonuclease V family. The cofactor is Mg(2+).

The protein resides in the cytoplasm. The enzyme catalyses Endonucleolytic cleavage at apurinic or apyrimidinic sites to products with a 5'-phosphate.. Its function is as follows. DNA repair enzyme involved in the repair of deaminated bases. Selectively cleaves double-stranded DNA at the second phosphodiester bond 3' to a deoxyinosine leaving behind the intact lesion on the nicked DNA. The sequence is that of Bifunctional methyltransferase/endonuclease from Thermoplasma volcanium (strain ATCC 51530 / DSM 4299 / JCM 9571 / NBRC 15438 / GSS1).